The sequence spans 414 residues: Serine--tRNA ligase (414 aa).

230-232 lines the L-serine pocket; the sequence is TSE. An ATP-binding site is contributed by 261–263; sequence RQE. Residue E284 coordinates L-serine. ATP is bound at residue 348-351; it reads EISS. S382 contributes to the L-serine binding site.

It belongs to the class-II aminoacyl-tRNA synthetase family. Type-1 seryl-tRNA synthetase subfamily. Homodimer. The tRNA molecule binds across the dimer.

It is found in the cytoplasm. The catalysed reaction is tRNA(Ser) + L-serine + ATP = L-seryl-tRNA(Ser) + AMP + diphosphate + H(+). The enzyme catalyses tRNA(Sec) + L-serine + ATP = L-seryl-tRNA(Sec) + AMP + diphosphate + H(+). It functions in the pathway aminoacyl-tRNA biosynthesis; selenocysteinyl-tRNA(Sec) biosynthesis; L-seryl-tRNA(Sec) from L-serine and tRNA(Sec): step 1/1. Catalyzes the attachment of serine to tRNA(Ser). Is also able to aminoacylate tRNA(Sec) with serine, to form the misacylated tRNA L-seryl-tRNA(Sec), which will be further converted into selenocysteinyl-tRNA(Sec). This chain is Serine--tRNA ligase, found in Campylobacter concisus (strain 13826).